The primary structure comprises 196 residues: Calcium channel flower (196 aa).

A run of 3 helical transmembrane segments spans residues 35–55, 70–92, and 113–133; these read LGIV…LSII, LAGF…QVGS, and AVPP…GLIF.

This sequence belongs to the calcium channel flower family. In terms of assembly, homomultimer. Associates with the dally/ magu complex.

Its subcellular location is the cell membrane. It localises to the cytoplasmic vesicle. The protein localises to the secretory vesicle. The protein resides in the synaptic vesicle membrane. It is found in the presynaptic cell membrane. Its subcellular location is the endosome. With respect to regulation, channel activity is inhibited by La(3+), which reduces Ca(2+) influx and thus inhibits it's function in promoting activity-dependent bulk endocytosis (ADBE) in response to high stimuli. Its function is as follows. Transmembrane protein which mediates synaptic endocytosis, fitness-based cell culling, neuronal culling, morphogen gradient scaling, and calcium transport. Regulates synaptic endocytosis and hence couples exo- with endocytosis. Controls two major modes of synaptic vesicle (SV) endocytosis in the synaptic boutons of neuromuscular junctions (NMJs); Ca(2+) channel-independent Clathrin-mediated endocytosis (CME) in response to mild stimulation, and Ca(2+) channel-dependent activity-dependent bulk endocytosis (ADBE) in response to strong stimulation. Functions in ADBE and subsequent SV reformation from bulk endosomes by initiating Ca(2+) channel-dependent phosphatidylinositol 4,5-bisphosphate (PtdIns(4,5)P2) compartmentalization in synaptic boutons. There it acts at the periactive zone to provide the low Ca(2+) levels required to initiate Calcineurin activation and upregulate PtdIns(4,5)P2. Conversely PtdIns(4,5)P2 enhances fwe Ca(2+) channel-activity, establishing a positive feedback loop that induces PtdIns(4,5)P2 microdomain at the periactive zone. These microdomains trigger bulk membrane invagination (i.e. ADBE) by triggering actin polymerization while also promoting localization of fwe to bulk endosomes, thereby removing the ADBE trigger to reduce endocytosis and prevent excess membrane uptake. PtdIns(4,5)P2 then promotes SV reformation from the bulk endosomes, to coordinate ADBE and subsequent SV reformation. Different combinations of the flower isoforms at the cell membrane are also required for the identification and elimination of suboptimal or supernumerary cells during development, regeneration, and adulthood. Required for the recognition and elimination of unfit cells in the developing wing during cell competition. In the developing pupal retina, mediates the elimination of unwanted postmitotic neurons, including supernumerary photoreceptor neurons that form at the periphery of the retina and are contained within incomplete ommatidia units. Also required for efficient elimination and replacement of old neurons by newly generated neurons during regeneration in the adult brain following mechanical injury. Downstream of the flower fitness fingerprints, cells identified as unwanted or unfit are eliminated via apoptosis through the expression of ahuizotl (azot). However, the cells marked for elimination by the flower isoforms only undergo apoptosis if additional thresholds are met; (1) their neighboring fit/healthy cells express different levels of the fwe isoforms, and (2) the levels of the protective signal SPARC expressed by the loser or unwanted cells are unable to inhibit caspase activation. These additional thresholds for flower-mediated apoptosis, allows useful cells to recover from transient and limited stress before they are unnecessarily eliminated. Functions with dally and magu in a mechanism of scaling, which utilises apoptosis to ensure that the dpp morphogen gradient, which mediates organ growth, remains proportional to the size of the growing wing. In this mechanism, fwe represses dally- and Magu-dependent activity in expanding the gradient, and dally/Magu inhibits fwe-dependent apoptosis to keep cell death rate low. When the levels of these different proteins are optimally regulated the gradient correctly scales with organ growth but when this fails, fwe-mediated apoptosis is activated to trim the developing tissue to match the correct size of the gradient. The chain is Calcium channel flower from Drosophila grimshawi (Hawaiian fruit fly).